Here is a 501-residue protein sequence, read N- to C-terminus: Lysine--tRNA ligase (501 aa).

The Mg(2+) site is built by E402 and E409.

It belongs to the class-II aminoacyl-tRNA synthetase family. In terms of assembly, homodimer. The cofactor is Mg(2+).

The protein localises to the cytoplasm. It carries out the reaction tRNA(Lys) + L-lysine + ATP = L-lysyl-tRNA(Lys) + AMP + diphosphate. This chain is Lysine--tRNA ligase (lysS), found in Helicobacter pylori (strain J99 / ATCC 700824) (Campylobacter pylori J99).